The following is a 442-amino-acid chain: Mitochondrial distribution and morphology protein 12 (442 aa).

An SMP-LTD domain is found at 1 to 442 (MSIDINWEAA…VYPSFWTFLV (442 aa)). Disordered regions lie at residues 67-125 (NDFY…RVGY), 202-277 (LSLA…RRMR), and 364-387 (EGYH…RRSN). The span at 69 to 80 (FYEEDEDGEDLS) shows a compositional bias: acidic residues. Polar residues predominate over residues 90–100 (PSSQGLSQSTP). A compositionally biased stretch (low complexity) spans 101–112 (NGDAGSSNSSSN). The segment covering 213 to 222 (RQRERARSSD) has biased composition (basic and acidic residues). The span at 227-245 (SPQSRSRPSTSSTRQRTST) shows a compositional bias: low complexity.

Belongs to the MDM12 family. As to quaternary structure, component of the ER-mitochondria encounter structure (ERMES) or MDM complex, composed of MMM1, MDM10, MDM12 and MDM34. An MMM1 homodimer associates with one molecule of MDM12 on each side in a pairwise head-to-tail manner, and the SMP-LTD domains of MMM1 and MDM12 generate a continuous hydrophobic tunnel for phospholipid trafficking.

The protein resides in the mitochondrion outer membrane. Its subcellular location is the endoplasmic reticulum membrane. Functionally, component of the ERMES/MDM complex, which serves as a molecular tether to connect the endoplasmic reticulum (ER) and mitochondria. Components of this complex are involved in the control of mitochondrial shape and protein biogenesis, and function in nonvesicular lipid trafficking between the ER and mitochondria. MDM12 is required for the interaction of the ER-resident membrane protein MMM1 and the outer mitochondrial membrane-resident beta-barrel protein MDM10. The MDM12-MMM1 subcomplex functions in the major beta-barrel assembly pathway that is responsible for biogenesis of all mitochondrial outer membrane beta-barrel proteins, and acts in a late step after the SAM complex. The MDM10-MDM12-MMM1 subcomplex further acts in the TOM40-specific pathway after the action of the MDM12-MMM1 complex. Essential for establishing and maintaining the structure of mitochondria and maintenance of mtDNA nucleoids. In Arthroderma otae (strain ATCC MYA-4605 / CBS 113480) (Microsporum canis), this protein is Mitochondrial distribution and morphology protein 12.